The chain runs to 432 residues: Mannose-6-phosphate isomerase 1 (432 aa).

An N-acetylmethionine modification is found at M1. Zn(2+) is bound by residues Q124, H126, E151, and H288. R307 is an active-site residue.

It belongs to the mannose-6-phosphate isomerase type 1 family. It depends on Zn(2+) as a cofactor. Constitutively expressed in both vegetative and reproductive organs under normal growth conditions (at protein level).

The catalysed reaction is D-mannose 6-phosphate = D-fructose 6-phosphate. Its pathway is nucleotide-sugar biosynthesis; GDP-alpha-D-mannose biosynthesis; alpha-D-mannose 1-phosphate from D-fructose 6-phosphate: step 1/2. Its activity is regulated as follows. Inhibited by EDTA, Zn(2+), Cd(2+), Co(2+), p-chloromercuribenzoate and L-ascorbic acid (AsA). In terms of biological role, phosphomannose isomerase involved in the synthesis of the GDP-mannose and dolichol-phosphate-mannose required for a number of critical mannosyl transfer reactions. Involved in the ascorbic acid (AsA) biosynthesis. Required during the endosperm development. This is Mannose-6-phosphate isomerase 1 (PMI1) from Arabidopsis thaliana (Mouse-ear cress).